Here is a 248-residue protein sequence, read N- to C-terminus: Adenosylcobinamide-GDP ribazoletransferase (248 aa).

5 helical membrane passes run 30–50 (LAES…CYAL), 54–74 (VLSG…LTAV), 112–132 (FGAL…DAVI), 134–154 (AGSF…MVLA), and 188–208 (AVSA…LAAG).

This sequence belongs to the CobS family. It depends on Mg(2+) as a cofactor.

It localises to the cell inner membrane. The catalysed reaction is alpha-ribazole + adenosylcob(III)inamide-GDP = adenosylcob(III)alamin + GMP + H(+). The enzyme catalyses alpha-ribazole 5'-phosphate + adenosylcob(III)inamide-GDP = adenosylcob(III)alamin 5'-phosphate + GMP + H(+). Its pathway is cofactor biosynthesis; adenosylcobalamin biosynthesis; adenosylcobalamin from cob(II)yrinate a,c-diamide: step 7/7. In terms of biological role, joins adenosylcobinamide-GDP and alpha-ribazole to generate adenosylcobalamin (Ado-cobalamin). Also synthesizes adenosylcobalamin 5'-phosphate from adenosylcobinamide-GDP and alpha-ribazole 5'-phosphate. The sequence is that of Adenosylcobinamide-GDP ribazoletransferase from Syntrophobacter fumaroxidans (strain DSM 10017 / MPOB).